The chain runs to 944 residues: Translation initiation factor IF-2 (944 aa).

The segment at 61–281 (IQANQPAKNP…TAKNNKSHKI (221 aa)) is disordered. The segment covering 132 to 150 (TFENQTPPTENTPKVVSHS) has biased composition (polar residues). The span at 151-169 (QIEKAKQKLQEIQKSREAL) shows a compositional bias: basic and acidic residues. Low complexity predominate over residues 175 to 185 (SNANNASNTNN). The span at 186-203 (AKKEISEVKKQEQEIKRH) shows a compositional bias: basic and acidic residues. Residues 204-215 (ENIKRRTGFRVI) are compositionally biased toward basic residues. Residues 244 to 259 (EDIKKEWQEKDKQEAK) are compositionally biased toward basic and acidic residues. Residues 443 to 612 (ERPPVVTIMG…LIQADIMELK (170 aa)) enclose the tr-type G domain. The segment at 452-459 (GHVDHGKT) is G1. 452 to 459 (GHVDHGKT) provides a ligand contact to GTP. Residues 477–481 (GITQH) form a G2 region. Positions 498–501 (DTPG) are G3. Residues 498 to 502 (DTPGH) and 552 to 555 (NKMD) each bind GTP. Residues 552–555 (NKMD) are G4. The G5 stretch occupies residues 588 to 590 (SAK).

The protein belongs to the TRAFAC class translation factor GTPase superfamily. Classic translation factor GTPase family. IF-2 subfamily.

The protein localises to the cytoplasm. Functionally, one of the essential components for the initiation of protein synthesis. Protects formylmethionyl-tRNA from spontaneous hydrolysis and promotes its binding to the 30S ribosomal subunits. Also involved in the hydrolysis of GTP during the formation of the 70S ribosomal complex. This is Translation initiation factor IF-2 from Helicobacter pylori (strain HPAG1).